The sequence spans 371 residues: Interstrand DNA cross-link repair glycosylase (371 aa).

The short motif at 37–39 (QAQ) is the QXQ; important for activity element.

Belongs to the DNA glycosylase AlkZ-like family.

DNA glycosylase involved in the repair of interstrand DNA cross-links (ICLs), which are highly toxic DNA lesions that covalently tether the opposing strands of DNA, thereby inhibiting essential cellular processes such as DNA replication and transcription. Acts by unhooking both sides of the ICLs, forming abasic (AP) sites on both strands. AlkZ specifically repairs DNA damage induced by azinomycin B (AZB), a natural product with potent antibiotic and antitumor activities that interacts covalently with duplex DNA and forms ICLs. AlkZ thus confers self-resistance to azinomycin B, which is produced by S.sahachiroi. It may also protect target sites by protein-DNA interaction. Binds sequence non-specifically to native DNA and structure-specifically to azinomycin B-modified sites, with higher affinity to azinomycin B-modified sites and lower affinity to native DNA duplex. In vitro, also acts on monoadducts and can catalyze the excision of N7-methylguanine (7mGua) from an oligonucleotide containing N7-methyldeoxyguanosine (d7mG). Is a monofunctional DNA glycosylase that does not have lyase activity. The sequence is that of Interstrand DNA cross-link repair glycosylase from Streptomyces sahachiroi.